Reading from the N-terminus, the 156-residue chain is Envelope glycoprotein L (156 aa).

A signal peptide spans 1-16 (MSPLVAVLVFFSAALG). Residues 50–156 (ELEWDDEDHP…LRYNGGPPAE (107 aa)) form the gL alphaherpesvirus-type domain. C71 and C95 are joined by a disulfide.

The protein belongs to the herpesviridae glycoprotein L (gL) family. Alphaherpesvirinae gL subfamily. Interacts with glycoprotein H (gH); this interaction is necessary for the correct processing and cell surface expression of gH. The heterodimer gH/gL seems to interact with gB trimers during fusion. O-glycosylated, and sialylated.

The protein resides in the virion membrane. It is found in the host cell membrane. It localises to the host Golgi apparatus. Its subcellular location is the host trans-Golgi network. In terms of biological role, the heterodimer glycoprotein H-glycoprotein L is required for the fusion of viral and plasma membranes leading to virus entry into the host cell. Acts as a functional inhibitor of gH and maintains gH in an inhibited form. Upon binding to host integrins, gL dissociates from gH leading to activation of the viral fusion glycoproteins gB and gH. The polypeptide is Envelope glycoprotein L (Suid herpesvirus 1 (strain Indiana-Funkhauser / Becker) (SuHV-1)).